The sequence spans 1412 residues: DNA-directed RNA polymerase subunit beta'' (1412 aa).

Residues cysteine 220, cysteine 294, cysteine 301, and cysteine 304 each coordinate Zn(2+).

It belongs to the RNA polymerase beta' chain family. RpoC2 subfamily. In plastids the minimal PEP RNA polymerase catalytic core is composed of four subunits: alpha, beta, beta', and beta''. When a (nuclear-encoded) sigma factor is associated with the core the holoenzyme is formed, which can initiate transcription. Requires Zn(2+) as cofactor.

The protein resides in the plastid. Its subcellular location is the chloroplast. It catalyses the reaction RNA(n) + a ribonucleoside 5'-triphosphate = RNA(n+1) + diphosphate. Its function is as follows. DNA-dependent RNA polymerase catalyzes the transcription of DNA into RNA using the four ribonucleoside triphosphates as substrates. This is DNA-directed RNA polymerase subunit beta'' from Chara vulgaris (Common stonewort).